The primary structure comprises 344 residues: Protein Tob2 (344 aa).

2 disordered regions span residues G144 to R169 and M191 to N225. The span at S145–P164 shows a compositional bias: low complexity. The span at G194–G210 shows a compositional bias: gly residues. Over residues Q211–N225 the composition is skewed to low complexity. S254 carries the phosphoserine modification.

The protein belongs to the BTG family. Associates with CAF1. Ubiquitous.

It is found in the cytoplasm. Functionally, anti-proliferative protein inhibits cell cycle progression from the G0/G1 to S phases. The protein is Protein Tob2 (TOB2) of Homo sapiens (Human).